We begin with the raw amino-acid sequence, 197 residues long: Histone chaperone asf1b-A (197 aa).

It belongs to the ASF1 family. As to quaternary structure, interacts with histone H3 and histone H4.

Its subcellular location is the nucleus. Its function is as follows. Histone chaperone that facilitates histone deposition and histone exchange and removal during nucleosome assembly and disassembly. This chain is Histone chaperone asf1b-A (asf1ba), found in Danio rerio (Zebrafish).